The following is an 868-amino-acid chain: Ionotropic receptor 93a (868 aa).

The first 28 residues, 1-28 (MNPGEMRPSACLLLLAGLQLSILVPTEA), serve as a signal peptide directing secretion. At 29–565 (NDFSSFLSAN…ITRKPDEVSR (537 aa)) the chain is on the extracellular side. N38, N205, N294, N305, N432, N475, N499, and N543 each carry an N-linked (GlcNAc...) asparagine glycan. A helical membrane pass occupies residues 566 to 586 (IYLFTAPFTVETWFCLMGIIL). Topologically, residues 587-642 (LTAPTLYAINRLAPLKEMRIVGLSTVKSCFWYIFGALLQQGGMYLPTADSGRLVVG) are cytoplasmic. Residues 643 to 663 (FWWIVVIVLVTTYCGNLVAFL) form a helical membrane-spanning segment. Residues 664 to 832 (TFPKFQPGVD…HKVNMDDMQG (169 aa)) are Extracellular-facing. N691 is a glycosylation site (N-linked (GlcNAc...) asparagine). The helical transmembrane segment at 833-853 (CFLVLLLGFTLALLIVCGEFW) threads the bilayer. Topologically, residues 854-868 (YRRFRASRKRRQFTN) are cytoplasmic.

It belongs to the glutamate-gated ion channel (TC 1.A.10.1) family. In the antenna, detected in sacculus neurons which innervate the first and second chambers (at protein level). Expressed in multiple cells of the larval dorsal organ ganglion, including the dorsal organ cool cells where it is predominately localized to the dendritic bulbs (at protein level).

Its subcellular location is the cell membrane. Integral part of various neural sensory systems in the antenna that provide the neural basis for the response to environmental changes in temperature (thermosensation) and humidity (hygrosensation). Together with Ir21a and Ir25a, mediates the response of the larval dorsal organ cool cells, a trio of cool-responsive neurons, to cooling and is required for cool avoidance behavior. Together with Ir25a and Ir40a, mediates the response of the hydrosensory sacculus neurons to changes in relative humidity, and is required for dry detection and humidiy preference behavior. This chain is Ionotropic receptor 93a, found in Drosophila melanogaster (Fruit fly).